The following is a 709-amino-acid chain: Polyribonucleotide nucleotidyltransferase (709 aa).

The Mg(2+) site is built by aspartate 487 and aspartate 493. The region spanning 554–613 is the KH domain; the sequence is PRIHTMKISSDKIKDVIGKGGAVIRALCEETGTTIEIEDDGTIKIAATEGAAAKEAIRRI. Residues 623–691 enclose the S1 motif domain; sequence GKIYPGKVMR…RQGRIRLSIK (69 aa).

This sequence belongs to the polyribonucleotide nucleotidyltransferase family. In terms of assembly, component of the RNA degradosome, which is a multiprotein complex involved in RNA processing and mRNA degradation. It depends on Mg(2+) as a cofactor.

It is found in the cytoplasm. The enzyme catalyses RNA(n+1) + phosphate = RNA(n) + a ribonucleoside 5'-diphosphate. Its function is as follows. Involved in mRNA degradation. Catalyzes the phosphorolysis of single-stranded polyribonucleotides processively in the 3'- to 5'-direction. In Aliivibrio salmonicida (strain LFI1238) (Vibrio salmonicida (strain LFI1238)), this protein is Polyribonucleotide nucleotidyltransferase.